The primary structure comprises 541 residues: Glucose-6-phosphate isomerase (541 aa).

E346 (proton donor) is an active-site residue. Residues H377 and K506 contribute to the active site.

It belongs to the GPI family.

It localises to the cytoplasm. The catalysed reaction is alpha-D-glucose 6-phosphate = beta-D-fructose 6-phosphate. The protein operates within carbohydrate biosynthesis; gluconeogenesis. It functions in the pathway carbohydrate degradation; glycolysis; D-glyceraldehyde 3-phosphate and glycerone phosphate from D-glucose: step 2/4. Catalyzes the reversible isomerization of glucose-6-phosphate to fructose-6-phosphate. This is Glucose-6-phosphate isomerase from Rhizobium meliloti (strain 1021) (Ensifer meliloti).